The following is a 103-amino-acid chain: uncharacterized protein (103 aa).

This is an uncharacterized protein from Acanthamoeba polyphaga (Amoeba).